Reading from the N-terminus, the 100-residue chain is Aspartyl/glutamyl-tRNA(Asn/Gln) amidotransferase subunit C (100 aa).

This sequence belongs to the GatC family. In terms of assembly, heterotrimer of A, B and C subunits.

The catalysed reaction is L-glutamyl-tRNA(Gln) + L-glutamine + ATP + H2O = L-glutaminyl-tRNA(Gln) + L-glutamate + ADP + phosphate + H(+). The enzyme catalyses L-aspartyl-tRNA(Asn) + L-glutamine + ATP + H2O = L-asparaginyl-tRNA(Asn) + L-glutamate + ADP + phosphate + 2 H(+). Functionally, allows the formation of correctly charged Asn-tRNA(Asn) or Gln-tRNA(Gln) through the transamidation of misacylated Asp-tRNA(Asn) or Glu-tRNA(Gln) in organisms which lack either or both of asparaginyl-tRNA or glutaminyl-tRNA synthetases. The reaction takes place in the presence of glutamine and ATP through an activated phospho-Asp-tRNA(Asn) or phospho-Glu-tRNA(Gln). This chain is Aspartyl/glutamyl-tRNA(Asn/Gln) amidotransferase subunit C, found in Staphylococcus epidermidis (strain ATCC 35984 / DSM 28319 / BCRC 17069 / CCUG 31568 / BM 3577 / RP62A).